The chain runs to 143 residues: Glutaredoxin-2 (143 aa).

The transit peptide at Met-1–Leu-30 directs the protein to the mitochondrion. Position 37 is a phosphoserine (Ser-37). The Glutaredoxin domain maps to Val-41 to Gln-143. Lys-58–Tyr-63 contacts glutathione. Position 61 is an S-glutathionyl cysteine; alternate (Cys-61). A disulfide bridge connects residues Cys-61 and Cys-64. Position 91 is a phosphoserine (Ser-91). Glutathione is bound by residues Val-109 and Asn-122–Ser-123.

This sequence belongs to the glutaredoxin family.

Its subcellular location is the cytoplasm. It localises to the mitochondrion. It carries out the reaction 2 glutathione + H2O2 = glutathione disulfide + 2 H2O. The catalysed reaction is 1-chloro-2,4-dinitrobenzene + glutathione = 2,4-dinitrophenyl-S-glutathione + chloride + H(+). The enzyme catalyses RX + glutathione = an S-substituted glutathione + a halide anion + H(+). Its function is as follows. Component of the glutathione system which performs several activities such as glutathione-dependent oxidoreductase, glutathione peroxidase and glutathione S-transferase (GST) activity. The disulfide bond functions as an electron carrier in the glutathione-dependent synthesis of deoxyribonucleotides by the enzyme ribonucleotide reductase. In addition, it is also involved in reducing cytosolic protein- and non-protein-disulfides in a coupled system with glutathione reductase. Required for resistance to reactive oxygen species (ROS) by directly reducing hydroperoxides and for the detoxification of ROS-mediated damage. GRX2 is more active as an oxidoreductase than GRX1. Responsible for the S-glutathionylation of DHBP synthase. The polypeptide is Glutaredoxin-2 (GRX2) (Saccharomyces cerevisiae (strain ATCC 204508 / S288c) (Baker's yeast)).